A 194-amino-acid polypeptide reads, in one-letter code: Peptidyl-tRNA hydrolase (194 aa).

Tyr-17 lines the tRNA pocket. His-22 (proton acceptor) is an active-site residue. Tyr-68, Asn-70, and Asn-116 together coordinate tRNA.

It belongs to the PTH family. Monomer.

It is found in the cytoplasm. It catalyses the reaction an N-acyl-L-alpha-aminoacyl-tRNA + H2O = an N-acyl-L-amino acid + a tRNA + H(+). Functionally, hydrolyzes ribosome-free peptidyl-tRNAs (with 1 or more amino acids incorporated), which drop off the ribosome during protein synthesis, or as a result of ribosome stalling. Catalyzes the release of premature peptidyl moieties from peptidyl-tRNA molecules trapped in stalled 50S ribosomal subunits, and thus maintains levels of free tRNAs and 50S ribosomes. In Pseudomonas fluorescens (strain SBW25), this protein is Peptidyl-tRNA hydrolase.